The sequence spans 470 residues: UDP-N-acetylmuramoylalanine--D-glutamate ligase (470 aa).

124–130 (GTNGKTT) contributes to the ATP binding site.

This sequence belongs to the MurCDEF family.

It localises to the cytoplasm. It catalyses the reaction UDP-N-acetyl-alpha-D-muramoyl-L-alanine + D-glutamate + ATP = UDP-N-acetyl-alpha-D-muramoyl-L-alanyl-D-glutamate + ADP + phosphate + H(+). It participates in cell wall biogenesis; peptidoglycan biosynthesis. Cell wall formation. Catalyzes the addition of glutamate to the nucleotide precursor UDP-N-acetylmuramoyl-L-alanine (UMA). This chain is UDP-N-acetylmuramoylalanine--D-glutamate ligase, found in Prochlorococcus marinus (strain SARG / CCMP1375 / SS120).